Consider the following 943-residue polypeptide: UvrABC system protein A (943 aa).

31 to 38 (GLSGSGKS) contacts ATP. The C4-type zinc-finger motif lies at 253–280 (CPHCGYSVPELEPRLFSFNNPAGACPTC). 2 consecutive ABC transporter domains span residues 310–587 (WDRR…PHSI) and 607–937 (LDKK…RFLK). 640 to 647 (GVSGSGKS) serves as a coordination point for ATP. A C4-type zinc finger spans residues 740–766 (CEACQGDGVIKVEMHFLPDVYVPCEQC).

This sequence belongs to the ABC transporter superfamily. UvrA family. As to quaternary structure, forms a heterotetramer with UvrB during the search for lesions.

The protein localises to the cytoplasm. In terms of biological role, the UvrABC repair system catalyzes the recognition and processing of DNA lesions. UvrA is an ATPase and a DNA-binding protein. A damage recognition complex composed of 2 UvrA and 2 UvrB subunits scans DNA for abnormalities. When the presence of a lesion has been verified by UvrB, the UvrA molecules dissociate. The protein is UvrABC system protein A of Pasteurella multocida (strain Pm70).